The sequence spans 368 residues: Protein RecA (368 aa).

80–87 (GPESSGKT) is an ATP binding site. Positions 344–353 (NPTFTATPDS) are enriched in polar residues. The tract at residues 344 to 368 (NPTFTATPDSENADNADDEFSEEEL) is disordered. Residues 354–368 (ENADNADDEFSEEEL) show a composition bias toward acidic residues.

It belongs to the RecA family.

Its subcellular location is the cytoplasm. Functionally, can catalyze the hydrolysis of ATP in the presence of single-stranded DNA, the ATP-dependent uptake of single-stranded DNA by duplex DNA, and the ATP-dependent hybridization of homologous single-stranded DNAs. It interacts with LexA causing its activation and leading to its autocatalytic cleavage. The protein is Protein RecA of Mannheimia haemolytica (Pasteurella haemolytica).